The chain runs to 251 residues: Ubiquinone/menaquinone biosynthesis C-methyltransferase UbiE (251 aa).

S-adenosyl-L-methionine is bound by residues Thr-74, Asp-95, 123 to 124, and Ser-140; that span reads NA.

The protein belongs to the class I-like SAM-binding methyltransferase superfamily. MenG/UbiE family.

It carries out the reaction a 2-demethylmenaquinol + S-adenosyl-L-methionine = a menaquinol + S-adenosyl-L-homocysteine + H(+). The enzyme catalyses a 2-methoxy-6-(all-trans-polyprenyl)benzene-1,4-diol + S-adenosyl-L-methionine = a 5-methoxy-2-methyl-3-(all-trans-polyprenyl)benzene-1,4-diol + S-adenosyl-L-homocysteine + H(+). It functions in the pathway quinol/quinone metabolism; menaquinone biosynthesis; menaquinol from 1,4-dihydroxy-2-naphthoate: step 2/2. Its pathway is cofactor biosynthesis; ubiquinone biosynthesis. Methyltransferase required for the conversion of demethylmenaquinol (DMKH2) to menaquinol (MKH2) and the conversion of 2-polyprenyl-6-methoxy-1,4-benzoquinol (DDMQH2) to 2-polyprenyl-3-methyl-6-methoxy-1,4-benzoquinol (DMQH2). In Proteus mirabilis (strain HI4320), this protein is Ubiquinone/menaquinone biosynthesis C-methyltransferase UbiE.